The following is a 348-amino-acid chain: Heat-inducible transcription repressor HrcA (348 aa).

Belongs to the HrcA family.

Functionally, negative regulator of class I heat shock genes (grpE-dnaK-dnaJ and groELS operons). Prevents heat-shock induction of these operons. The chain is Heat-inducible transcription repressor HrcA from Thermomicrobium roseum (strain ATCC 27502 / DSM 5159 / P-2).